The following is a 354-amino-acid chain: RNA 3'-terminal phosphate cyclase (354 aa).

Residues glutamine 100 and 290–293 (HMGD) contribute to the ATP site. Histidine 316 (tele-AMP-histidine intermediate) is an active-site residue.

This sequence belongs to the RNA 3'-terminal cyclase family. Type 1 subfamily.

It localises to the cytoplasm. It catalyses the reaction a 3'-end 3'-phospho-ribonucleotide-RNA + ATP = a 3'-end 2',3'-cyclophospho-ribonucleotide-RNA + AMP + diphosphate. Catalyzes the conversion of 3'-phosphate to a 2',3'-cyclic phosphodiester at the end of RNA. The mechanism of action of the enzyme occurs in 3 steps: (A) adenylation of the enzyme by ATP; (B) transfer of adenylate to an RNA-N3'P to produce RNA-N3'PP5'A; (C) and attack of the adjacent 2'-hydroxyl on the 3'-phosphorus in the diester linkage to produce the cyclic end product. The biological role of this enzyme is unknown but it is likely to function in some aspects of cellular RNA processing. The sequence is that of RNA 3'-terminal phosphate cyclase from Caldivirga maquilingensis (strain ATCC 700844 / DSM 13496 / JCM 10307 / IC-167).